We begin with the raw amino-acid sequence, 142 residues long: Small ribosomal subunit protein uS12 (142 aa).

The protein belongs to the universal ribosomal protein uS12 family. Part of the 30S ribosomal subunit.

Its function is as follows. With S4 and S5 plays an important role in translational accuracy. Located at the interface of the 30S and 50S subunits. The chain is Small ribosomal subunit protein uS12 from Methanosarcina barkeri (strain Fusaro / DSM 804).